Here is a 169-residue protein sequence, read N- to C-terminus: MSAPPALQIREANAHLAAVHRRAAELEARLDAAERTVHAQAERLALHDQQLRAALDELGRAKDREIATLQEQLMTSEATVHSLQATVHQRDELIRQLQPRAELLQDICRRRPPLAGLLDALAEAERLGPLPASDPGHPPPGGPGPPLDNSTGEEADRDHLQPAVFGTTV.

Residues 7-89 are a coiled coil; the sequence is LQIREANAHL…VHSLQATVHQ (83 aa). Positions 126–135 are enriched in low complexity; that stretch reads RLGPLPASDP. Positions 126–169 are disordered; it reads RLGPLPASDPGHPPPGGPGPPLDNSTGEEADRDHLQPAVFGTTV. Positions 136-146 are enriched in pro residues; that stretch reads GHPPPGGPGPP.

The protein localises to the cytoplasm. The chain is Vimentin-type intermediate filament-associated coiled-coil protein (VMAC) from Homo sapiens (Human).